A 666-amino-acid polypeptide reads, in one-letter code: Galactocerebrosidase (666 aa).

A signal peptide spans Met1–Ala22. Position 91 (Thr91) interacts with substrate. Asn125 carries an N-linked (GlcNAc...) asparagine glycan. Substrate-binding residues include Trp133 and Asn179. The active-site Proton donor/acceptor is Glu180. The Nucleophile role is filled by Glu256. Cys269 and Cys376 form a disulfide bridge. Residue Asn361 is glycosylated (N-linked (GlcNAc...) asparagine). Arg378 provides a ligand contact to substrate. Residues Asn385, Asn390, Asn500, and Asn540 are each glycosylated (N-linked (GlcNAc...) asparagine).

Belongs to the glycosyl hydrolase 59 family.

Its subcellular location is the lysosome. The enzyme catalyses a beta-D-galactosyl-(1&lt;-&gt;1')-N-acylsphing-4-enine + H2O = an N-acylsphing-4-enine + D-galactose. The catalysed reaction is beta-D-galactosyl-(1&lt;-&gt;1)-sphing-4-enine + H2O = sphing-4-enine + D-galactose. It carries out the reaction a D-galactosylceramide + H2O = an N-acyl-sphingoid base + D-galactose. Hydrolyzes the galactose ester bonds of glycolipids such as galactosylceramide and galactosylsphingosine. This Salmo salar (Atlantic salmon) protein is Galactocerebrosidase.